A 453-amino-acid polypeptide reads, in one-letter code: Gamma-glutamylpolyamine synthetase GlnA2 (453 aa).

The region spanning 15–100 (RDIRFVRLWF…MFCDILMPDG (86 aa)) is the GS beta-grasp domain. The GS catalytic domain occupies 107-453 (PRYVLKRALA…FELRKSLPVL (347 aa)). Mg(2+)-binding residues include Glu-130 and Glu-132. Glu-182 lines the ATP pocket. Glu-187 and Glu-194 together coordinate Mg(2+). Gly-239 provides a ligand contact to L-glutamate. Mg(2+) is bound at residue His-243. 245 to 247 (HLS) contributes to the ATP binding site. The L-glutamate site is built by Arg-296, Glu-310, and Arg-322. ATP is bound by residues Arg-322 and Arg-327. A Mg(2+)-binding site is contributed by Glu-342. Residue Arg-344 coordinates L-glutamate.

It belongs to the glutamine synthetase family. It depends on Mg(2+) as a cofactor.

It catalyses the reaction putrescine + L-glutamate + ATP = gamma-L-glutamylputrescine + ADP + phosphate + H(+). It carries out the reaction spermine + L-glutamate + ATP = gamma-L-glutamylspermine + ADP + phosphate + H(+). The catalysed reaction is spermidine + L-glutamate + ATP = gamma-L-glutamylspermidine + ADP + phosphate + H(+). The enzyme catalyses cadaverine + L-glutamate + ATP = gamma-L-glutamylcadaverine + ADP + phosphate + H(+). It functions in the pathway amine and polyamine degradation; putrescine degradation. The protein operates within amine and polyamine degradation; spermidine degradation. Its pathway is amine and polyamine degradation; spermine degradation. With respect to regulation, no effect on activity with glutamine synthetase (GS) inhibitor methionine sulfoximine (MSO). In terms of biological role, involved in the catabolism of polyamines. Catalyzes the ATP-dependent gamma-glutamylation of polyamines. Substrates include putrescine, cadaverine, spermidine and spermine, with a preference for short-chain polyamine putrescine. No complementation of the L-glutamine auxotrophy of an E.coli glnA mutant. Together with GlnA3, enables survival of S.coelicolor under exposure to high local environmental polyamine concentrations, which is toxic to the cells. The chain is Gamma-glutamylpolyamine synthetase GlnA2 from Streptomyces coelicolor (strain ATCC BAA-471 / A3(2) / M145).